The primary structure comprises 452 residues: Probable pectate lyase 9 (452 aa).

Positions 1 to 25 are cleaved as a signal peptide; sequence MATSSLKLTSACFVLLFIFVGCVLT. Residues Asn-88, Asn-139, Asn-214, and Asn-233 are each glycosylated (N-linked (GlcNAc...) asparagine). Asp-250 contributes to the Ca(2+) binding site. A glycan (N-linked (GlcNAc...) asparagine) is linked at Asn-271. Positions 274 and 278 each coordinate Ca(2+). N-linked (GlcNAc...) asparagine glycosylation is found at Asn-281 and Asn-305. Arg-330 is a catalytic residue. Asn-374 is a glycosylation site (N-linked (GlcNAc...) asparagine).

The protein belongs to the polysaccharide lyase 1 family. Ca(2+) serves as cofactor.

It carries out the reaction Eliminative cleavage of (1-&gt;4)-alpha-D-galacturonan to give oligosaccharides with 4-deoxy-alpha-D-galact-4-enuronosyl groups at their non-reducing ends.. The protein operates within glycan metabolism; pectin degradation; 2-dehydro-3-deoxy-D-gluconate from pectin: step 2/5. The polypeptide is Probable pectate lyase 9 (Arabidopsis thaliana (Mouse-ear cress)).